The chain runs to 77 residues: Large ribosomal subunit protein bL28 (77 aa).

The tract at residues 1–26 (MARVCKVTGKRPMSGNNVSHANNKTK) is disordered.

The protein belongs to the bacterial ribosomal protein bL28 family.

The chain is Large ribosomal subunit protein bL28 from Neisseria gonorrhoeae (strain ATCC 700825 / FA 1090).